The chain runs to 122 residues: Large ribosomal subunit protein uL14 (122 aa).

This sequence belongs to the universal ribosomal protein uL14 family. In terms of assembly, part of the 50S ribosomal subunit. Forms a cluster with proteins L3 and L19. In the 70S ribosome, L14 and L19 interact and together make contacts with the 16S rRNA in bridges B5 and B8.

In terms of biological role, binds to 23S rRNA. Forms part of two intersubunit bridges in the 70S ribosome. This is Large ribosomal subunit protein uL14 from Exiguobacterium sp. (strain ATCC BAA-1283 / AT1b).